An 82-amino-acid polypeptide reads, in one-letter code: T-complex protein 1 subunit gamma (82 aa).

Gly15 contributes to the ADP binding site. Position 15 (Gly15) interacts with ATP. Residue Asp66 coordinates Mg(2+). 4 residues coordinate ADP: Gly67, Thr68, Thr69, and Ser70. ATP is bound by residues Gly67, Thr68, and Thr69.

This sequence belongs to the TCP-1 chaperonin family. Component of the chaperonin-containing T-complex (TRiC), a hexadecamer composed of two identical back-to-back stacked rings enclosing a protein folding chamber. Each ring is made up of eight different subunits: TCP1/CCT1, CCT2, CCT3, CCT4, CCT5, CCT6A/CCT6, CCT7, CCT8. Interacts with PACRG. Interacts with DNAAF4. Interacts with DLEC1.

It is found in the cytoplasm. The enzyme catalyses ATP + H2O = ADP + phosphate + H(+). Functionally, component of the chaperonin-containing T-complex (TRiC), a molecular chaperone complex that assists the folding of actin, tubulin and other proteins upon ATP hydrolysis. The TRiC complex mediates the folding of WRAP53/TCAB1, thereby regulating telomere maintenance. As part of the TRiC complex may play a role in the assembly of BBSome, a complex involved in ciliogenesis regulating transports vesicles to the cilia. The sequence is that of T-complex protein 1 subunit gamma (CCT3) from Sus scrofa (Pig).